A 253-amino-acid polypeptide reads, in one-letter code: NADH-quinone oxidoreductase subunit C (253 aa).

Disordered regions lie at residues 1-33 (MSPD…DTEP) and 234-253 (IPVE…RAYS).

The protein belongs to the complex I 30 kDa subunit family. NDH-1 is composed of 14 different subunits. Subunits NuoB, C, D, E, F, and G constitute the peripheral sector of the complex.

The protein localises to the cell membrane. It carries out the reaction a quinone + NADH + 5 H(+)(in) = a quinol + NAD(+) + 4 H(+)(out). NDH-1 shuttles electrons from NADH, via FMN and iron-sulfur (Fe-S) centers, to quinones in the respiratory chain. The immediate electron acceptor for the enzyme in this species is believed to be a menaquinone. Couples the redox reaction to proton translocation (for every two electrons transferred, four hydrogen ions are translocated across the cytoplasmic membrane), and thus conserves the redox energy in a proton gradient. The polypeptide is NADH-quinone oxidoreductase subunit C (Nocardia farcinica (strain IFM 10152)).